The primary structure comprises 762 residues: Polyadenylate-binding protein, cytoplasmic and nuclear (762 aa).

The tract at residues 39 to 58 (TGEEIDTAGPTPSSAAPHPQ) is disordered. Positions 48–58 (PTPSSAAPHPQ) are enriched in low complexity. RRM domains lie at 61-139 (ASLY…WSQR), 149-226 (GNVF…HHIP), 242-320 (TNIY…RAQK), and 346-470 (VNLY…LAQR). Disordered regions lie at residues 376-429 (KVMR…KSKL), 596-663 (SALA…AGAP), and 740-762 (VRQQ…EEKA). Positions 389 to 425 (GESKEGEESEKNKENKPEEKEGDDSKPEEKEGEDSKS) are enriched in basic and acidic residues. The segment covering 600 to 612 (GGRGGPAGRGPMQ) has biased composition (gly residues). Residues 645–663 (AAGRAPAGAPAGARGAGAP) show a composition bias toward low complexity. Residues 664-741 (EGLQGQLAAV…ALAVYDDYVR (78 aa)) form the PABC domain. The span at 753–762 (SKEEKTEEKA) shows a compositional bias: basic and acidic residues.

The protein belongs to the polyadenylate-binding protein type-1 family.

The protein localises to the cytoplasm. It localises to the nucleus. Functionally, binds the poly(A) tail of mRNA. Appears to be an important mediator of the multiple roles of the poly(A) tail in mRNA biogenesis, stability and translation. In the nucleus, involved in both mRNA cleavage and polyadenylation. Is also required for efficient mRNA export to the cytoplasm. Acts in concert with a poly(A)-specific nuclease (PAN) to affect poly(A) tail shortening, which may occur concomitantly with either nucleocytoplasmic mRNA transport or translational initiation. In the cytoplasm, stimulates translation initiation and regulates mRNA decay through translation termination-coupled poly(A) shortening, probably mediated by PAN. The protein is Polyadenylate-binding protein, cytoplasmic and nuclear (PAB1) of Pyricularia oryzae (strain 70-15 / ATCC MYA-4617 / FGSC 8958) (Rice blast fungus).